The primary structure comprises 118 residues: Large ribosomal subunit protein uL24 (118 aa).

It belongs to the universal ribosomal protein uL24 family. Part of the 50S ribosomal subunit.

In terms of biological role, one of two assembly initiator proteins, it binds directly to the 5'-end of the 23S rRNA, where it nucleates assembly of the 50S subunit. One of the proteins that surrounds the polypeptide exit tunnel on the outside of the subunit. The protein is Large ribosomal subunit protein uL24 of Synechococcus sp. (strain CC9605).